The primary structure comprises 225 residues: Insulin-induced gene 2 protein (225 aa).

Residues 1-28 lie on the Cytoplasmic side of the membrane; sequence MAEGETKSPGPKKCGPYISSVTSQSVNL. The chain crosses the membrane as a helical span at residues 29 to 51; the sequence is MIRGVVLFFIGVFLALVLNLLQI. Residues 52 to 70 lie on the Lumenal side of the membrane; the sequence is QRNVTLFPPDVIASIFSSA. The chain crosses the membrane as a helical span at residues 71–88; that stretch reads WWVPPCCGTASAVIGLLY. At 89–103 the chain is on the cytoplasmic side; sequence PCIDRHLGEPHKFKR. A helical transmembrane segment spans residues 104–126; that stretch reads EWSSVMRCVAVFVGINHASAKVD. Over 127 to 129 the chain is Lumenal; that stretch reads FDN. A helical membrane pass occupies residues 130 to 148; the sequence is NIQLSLTLAALSIGLWWTF. At 149–153 the chain is on the cytoplasmic side; that stretch reads DRSRS. Residue Ser-151 is modified to Phosphoserine. Residues 154 to 175 form a helical membrane-spanning segment; sequence GFGLGVGIAFLATVVTQLLVYN. At 176–189 the chain is on the lumenal side; sequence GVYQYTSPDFLYVR. A helical transmembrane segment spans residues 190 to 207; the sequence is SWLPCIFFAGGITMGNIG. Residues 208–225 are Cytoplasmic-facing; the sequence is RQLAMYECKVIAEKSHQE. A Cysteine sulfenic acid (-SOH); alternate modification is found at Cys-215. Cys-215 is covalently cross-linked (Glycyl cysteine thioester (Cys-Gly) (interchain with G-Cter in ubiquitin); alternate). The KxHxx motif lies at 219-225; that stretch reads AEKSHQE.

Belongs to the INSIG family. In terms of assembly, interacts with SCAP; interaction is direct and only takes place in the presence of sterols; it prevents interaction between SCAP and the coat protein complex II (COPII). Associates with the SCAP-SREBP complex (composed of SCAP and SREBF1/SREBP1 or SREBF2/SREBP2); association is mediated via its interaction with SCAP and only takes place in the presence of sterols. Interacts with RNF139. Interacts with RNF145. In terms of processing, phosphorylation at Ser-151 by PCK1 reduces binding to oxysterol, disrupting the interaction between INSIG2 and SCAP, thereby promoting nuclear translocation of SREBP proteins (SREBF1/SREBP1 or SREBF2/SREBP2) and subsequent transcription of downstream lipogenesis-related genes. Post-translationally, polyubiquitinated by AMFR/gp78 at Cys-215 in some tissues such as adipose tissues, undifferentiated myoblasts and liver, leading to its degradation. In differentiated myotubes, Cys-215 oxidation prevents ubiquitination at the same site, resulting in protein stabilization. Oxidized at Cys-215 in differentiated myotubes, preventing ubiquitination at the same site, and resulting in protein stabilization.

The protein resides in the endoplasmic reticulum membrane. Functionally, oxysterol-binding protein that mediates feedback control of cholesterol synthesis by controlling both endoplasmic reticulum to Golgi transport of SCAP and degradation of HMGCR. Acts as a negative regulator of cholesterol biosynthesis by mediating the retention of the SCAP-SREBP complex in the endoplasmic reticulum, thereby blocking the processing of sterol regulatory element-binding proteins (SREBPs) SREBF1/SREBP1 and SREBF2/SREBP2. Binds oxysterol, including 22-hydroxycholesterol, 24-hydroxycholesterol, 25-hydroxycholesterol and 27-hydroxycholesterol, regulating interaction with SCAP and retention of the SCAP-SREBP complex in the endoplasmic reticulum. In presence of oxysterol, interacts with SCAP, retaining the SCAP-SREBP complex in the endoplasmic reticulum, thereby preventing SCAP from escorting SREBF1/SREBP1 and SREBF2/SREBP2 to the Golgi. Sterol deprivation or phosphorylation by PCK1 reduce oxysterol-binding, disrupting the interaction between INSIG2 and SCAP, thereby promoting Golgi transport of the SCAP-SREBP complex, followed by processing and nuclear translocation of SREBF1/SREBP1 and SREBF2/SREBP2. Also regulates cholesterol synthesis by regulating degradation of HMGCR: initiates the sterol-mediated ubiquitin-mediated endoplasmic reticulum-associated degradation (ERAD) of HMGCR via recruitment of the reductase to the ubiquitin ligase RNF139. The sequence is that of Insulin-induced gene 2 protein from Pongo abelii (Sumatran orangutan).